The chain runs to 687 residues: Tripartite terminase subunit 3 (687 aa).

The disordered stretch occupies residues 67–91 (HHPATPTSANPDVGTPRPSEDNVPA). The short motif at 221–228 (IPRRHGKT) is the Walker A motif element. Positions 316–321 (LLYVDE) match the Walker B motif motif. Catalysis depends on Glu-321, which acts as the For ATPase activity. Residues Asp-476, Glu-550, and Asp-662 each act as for nuclease activity in the active site.

This sequence belongs to the herpesviridae TRM3 protein family. In terms of assembly, interacts with the terminase subunits TRM1 and TRM2. Interacts with portal protein.

The protein localises to the host nucleus. Component of the molecular motor that translocates viral genomic DNA in empty capsid during DNA packaging. Forms a tripartite terminase complex together with TRM1 and TRM2 in the host cytoplasm. Once the complex reaches the host nucleus, it interacts with the capsid portal vertex. This portal forms a ring in which genomic DNA is translocated into the capsid. TRM3 carries an RNase H-like nuclease activity that plays an important role for the cleavage of concatemeric viral DNA into unit length genomes. In Human herpesvirus 8 type P (isolate GK18) (HHV-8), this protein is Tripartite terminase subunit 3.